Consider the following 388-residue polypeptide: MNKSKGGLQLTVQTLSLVAGFMVWSIIAPLMPMISQDIKITSSQISIVLAIPVILGSVLRIPFGYLTNIIGAKWVFFSSFIILLFPIFLLSQAQSVNMLMLAGFFLGVGGAVFSVGVTSIPKYFPKDKVGLANGIYGMGNLGTAVSSFLAPPIAGAIGWQSTVRLYLIVMAVFAIVMFFLGDAKEPKVKIPLVAQTKDLLKDLRTYYLSFWYFITFGSFVAFGIFLPKYLVDHYELTTVDAGIRAGIFIAIATFLRPLGGIIGDKIDAVKALKVDFLFMIIGAIILGIANDMILFTVGCLTVSVCAGIGNGLVFKLVPQYFQKEAGVANGIVSMMGGLGGFFPPLVITYVTSITGTSHLAFIFLALFGVLALVTMWHLSKKNRSLAYK.

12 consecutive transmembrane segments (helical) span residues 14–34 (TLSLVAGFMVWSIIAPLMPMI), 45–65 (ISIVLAIPVILGSVLRIPFGY), 69–89 (IIGAKWVFFSSFIILLFPIFL), 98–118 (MLMLAGFFLGVGGAVFSVGVT), 139–159 (GNLGTAVSSFLAPPIAGAIGW), 161–181 (STVRLYLIVMAVFAIVMFFLG), 206–226 (YYLSFWYFITFGSFVAFGIFL), 242–262 (GIRAGIFIAIATFLRPLGGII), 276–296 (FLFMIIGAIILGIANDMILFT), 297–317 (VGCLTVSVCAGIGNGLVFKLV), 330–350 (GIVSMMGGLGGFFPPLVITYV), and 359–379 (LAFIFLALFGVLALVTMWHLS).

The protein belongs to the major facilitator superfamily. Nitrate/nitrite porter (TC 2.A.1.8) family.

The protein resides in the cell membrane. Its function is as follows. Probably required for nitrate uptake under anoxic conditions. Also possibly involved in excretion of nitrite produced by the dissimilatory reduction of nitrate. The polypeptide is Probable nitrate transporter NarT (narT) (Staphylococcus carnosus (strain TM300)).